A 261-amino-acid polypeptide reads, in one-letter code: Proteasome subunit beta type-2 (261 aa).

A propeptide spans 1–29 (MAGLSFDNYQRNNFLAENSHTQPKATSTG) (removed in mature form). Catalysis depends on Thr-30, which acts as the Nucleophile.

It belongs to the peptidase T1B family. As to quaternary structure, the 26S proteasome consists of a 20S proteasome core and two 19S regulatory subunits. The 20S proteasome core is composed of 28 subunits that are arranged in four stacked rings, resulting in a barrel-shaped structure. The two end rings are each formed by seven alpha subunits, and the two central rings are each formed by seven beta subunits. The catalytic chamber with the active sites is on the inside of the barrel.

The protein localises to the cytoplasm. The protein resides in the nucleus. It catalyses the reaction Cleavage of peptide bonds with very broad specificity.. Its function is as follows. The proteasome degrades poly-ubiquitinated proteins in the cytoplasm and in the nucleus. It is essential for the regulated turnover of proteins and for the removal of misfolded proteins. The proteasome is a multicatalytic proteinase complex that is characterized by its ability to cleave peptides with Arg, Phe, Tyr, Leu, and Glu adjacent to the leaving group at neutral or slightly basic pH. It has an ATP-dependent proteolytic activity. The sequence is that of Proteasome subunit beta type-2 (PUP1) from Saccharomyces cerevisiae (strain ATCC 204508 / S288c) (Baker's yeast).